Consider the following 512-residue polypeptide: Solute carrier family 2, facilitated glucose transporter member 7 (512 aa).

At 1-21 the chain is on the cytoplasmic side; that stretch reads MENKEAGTPPPIPSREGRLQP. A helical membrane pass occupies residues 22 to 42; the sequence is TLLLATLSAAFGSAFQYGYNL. The Extracellular portion of the chain corresponds to 43 to 78; sequence SVVNTPHKVFKSFYNETYFERHATFMDGKLMLLLWS. A glycan (N-linked (GlcNAc...) asparagine) is linked at Asn-57. Residues 79 to 99 traverse the membrane as a helical segment; the sequence is CTVSMFPLGGLLGSLLVGLLV. At 100–107 the chain is on the cytoplasmic side; it reads DSCGRKGT. A helical membrane pass occupies residues 108–128; it reads LLINNIFAIIPAILMGVSKVA. Residues 129–138 are Extracellular-facing; it reads KAFELIVFSR. A helical membrane pass occupies residues 139 to 159; the sequence is VVLGVCAGISYSALPMYLGEL. The Cytoplasmic segment spans residues 160–172; it reads APKNLRGMVGTMT. Residues 173-193 traverse the membrane as a helical segment; sequence EVFVIVGVFLAQIFSLQAILG. Residues 194–198 lie on the Extracellular side of the membrane; sequence NPAGW. The chain crosses the membrane as a helical span at residues 199 to 219; that stretch reads PVLLALTGVPALLQLLTLPFF. The Cytoplasmic segment spans residues 220–281; it reads PESPRYSLIQ…LHLCALRSLR (62 aa). The chain crosses the membrane as a helical span at residues 282-302; it reads WQLLSIIVLMAGQQLSGINAI. Residues 294 to 295 and Asn-300 each bind D-glucose; that span reads QQ. The Extracellular segment spans residues 303 to 321; the sequence is NYYADTIYTSAGVEAAHSQ. Residues 322–342 form a helical membrane-spanning segment; sequence YVTVGSGVVNIVMTITSAVLV. Asn-331 is a binding site for D-glucose. The Cytoplasmic portion of the chain corresponds to 343 to 350; that stretch reads ERLGRRHL. A helical membrane pass occupies residues 351–371; the sequence is LLAGYGICGSACLVLTVVLLF. The Extracellular segment spans residues 372–379; the sequence is QNRVPELS. The helical transmembrane segment at 380 to 400 threads the bilayer; sequence YLGIICVFAYIAGHSIGPSPV. Residues 401 to 415 lie on the Cytoplasmic side of the membrane; sequence PSVVRTEIFLQSSRR. A helical transmembrane segment spans residues 416 to 436; the sequence is AAFMVDGAVHWLTNFIIGFLF. The Extracellular segment spans residues 437-445; it reads PSIQEAIGA. A helical transmembrane segment spans residues 446–466; it reads YSFIIFAGICLLTAIYIYVVI. Topologically, residues 467–512 are cytoplasmic; the sequence is PETKGKTFVEINRIFAKRNRVKLPEEKEETIDAGPPTASPAKETSF. Residues 491-512 form a disordered region; sequence EEKEETIDAGPPTASPAKETSF.

This sequence belongs to the major facilitator superfamily. Sugar transporter (TC 2.A.1.1) family. Glucose transporter subfamily. Expressed in small intestine and colon. Weakly expressed in testis and prostate.

The protein resides in the cell membrane. It localises to the apical cell membrane. It catalyses the reaction D-glucose(out) = D-glucose(in). The catalysed reaction is D-fructose(out) = D-fructose(in). Its activity is regulated as follows. Glucose and fructose transport are inhibited by the flavonoid apigenin. Probable sugar transporter. Even if its physiological substrate is subject to discussion, it is able to transport glucose and fructose. Does not transport galactose, 2-deoxy-d-glucose and xylose. This is Solute carrier family 2, facilitated glucose transporter member 7 from Homo sapiens (Human).